The sequence spans 512 residues: Glucose-6-phosphate 1-dehydrogenase (512 aa).

NADP(+) contacts are provided by residues Arg-61, 103–104 (EF), and Lys-171. 4 residues coordinate substrate: His-201, Lys-205, Glu-239, and Asp-258. His-263 (proton acceptor) is an active-site residue. 2 residues coordinate substrate: Lys-360 and Lys-365. Residues 479-512 (QDSSPSFPNYPAGSSGPKEADALIERDGRSWRPL) are disordered. The segment covering 496 to 512 (KEADALIERDGRSWRPL) has biased composition (basic and acidic residues).

It belongs to the glucose-6-phosphate dehydrogenase family.

It catalyses the reaction D-glucose 6-phosphate + NADP(+) = 6-phospho-D-glucono-1,5-lactone + NADPH + H(+). It participates in carbohydrate degradation; pentose phosphate pathway; D-ribulose 5-phosphate from D-glucose 6-phosphate (oxidative stage): step 1/3. In terms of biological role, catalyzes the oxidation of glucose 6-phosphate to 6-phosphogluconolactone. The polypeptide is Glucose-6-phosphate 1-dehydrogenase (Chlamydia pneumoniae (Chlamydophila pneumoniae)).